The primary structure comprises 478 residues: Glutamate--tRNA ligase (478 aa).

Positions 8 to 18 (PSPTGYLHLGN) match the 'HIGH' region motif. A 'KMSKS' region motif is present at residues 248 to 252 (KLSKR). Residue lysine 251 participates in ATP binding.

Belongs to the class-I aminoacyl-tRNA synthetase family. Glutamate--tRNA ligase type 1 subfamily. Monomer.

The protein resides in the cytoplasm. The catalysed reaction is tRNA(Glu) + L-glutamate + ATP = L-glutamyl-tRNA(Glu) + AMP + diphosphate. In terms of biological role, catalyzes the attachment of glutamate to tRNA(Glu) in a two-step reaction: glutamate is first activated by ATP to form Glu-AMP and then transferred to the acceptor end of tRNA(Glu). The sequence is that of Glutamate--tRNA ligase from Sulfurihydrogenibium sp. (strain YO3AOP1).